Here is a 461-residue protein sequence, read N- to C-terminus: Bifunctional protein GlmU (461 aa).

A pyrophosphorylase region spans residues 1–229 (MEKYVVVLAA…FSESLGVNDR (229 aa)). UDP-N-acetyl-alpha-D-glucosamine contacts are provided by residues 8-11 (LAAG), K22, Q72, and 77-78 (GT). Residue D102 participates in Mg(2+) binding. G139, E154, N169, and N227 together coordinate UDP-N-acetyl-alpha-D-glucosamine. N227 is a binding site for Mg(2+). The interval 230 to 250 (IALAEATRIMQRRINEGHMRD) is linker. An N-acetyltransferase region spans residues 251 to 461 (GVTFIDPATA…LPLSEDEEWK (211 aa)). 2 residues coordinate UDP-N-acetyl-alpha-D-glucosamine: R332 and K350. Catalysis depends on H362, which acts as the Proton acceptor. Y365 and N376 together coordinate UDP-N-acetyl-alpha-D-glucosamine. Residues A422 and R439 each coordinate acetyl-CoA.

This sequence in the N-terminal section; belongs to the N-acetylglucosamine-1-phosphate uridyltransferase family. It in the C-terminal section; belongs to the transferase hexapeptide repeat family. As to quaternary structure, homotrimer. It depends on Mg(2+) as a cofactor.

Its subcellular location is the cytoplasm. It catalyses the reaction alpha-D-glucosamine 1-phosphate + acetyl-CoA = N-acetyl-alpha-D-glucosamine 1-phosphate + CoA + H(+). The catalysed reaction is N-acetyl-alpha-D-glucosamine 1-phosphate + UTP + H(+) = UDP-N-acetyl-alpha-D-glucosamine + diphosphate. It participates in nucleotide-sugar biosynthesis; UDP-N-acetyl-alpha-D-glucosamine biosynthesis; N-acetyl-alpha-D-glucosamine 1-phosphate from alpha-D-glucosamine 6-phosphate (route II): step 2/2. It functions in the pathway nucleotide-sugar biosynthesis; UDP-N-acetyl-alpha-D-glucosamine biosynthesis; UDP-N-acetyl-alpha-D-glucosamine from N-acetyl-alpha-D-glucosamine 1-phosphate: step 1/1. Its pathway is bacterial outer membrane biogenesis; LPS lipid A biosynthesis. In terms of biological role, catalyzes the last two sequential reactions in the de novo biosynthetic pathway for UDP-N-acetylglucosamine (UDP-GlcNAc). The C-terminal domain catalyzes the transfer of acetyl group from acetyl coenzyme A to glucosamine-1-phosphate (GlcN-1-P) to produce N-acetylglucosamine-1-phosphate (GlcNAc-1-P), which is converted into UDP-GlcNAc by the transfer of uridine 5-monophosphate (from uridine 5-triphosphate), a reaction catalyzed by the N-terminal domain. The chain is Bifunctional protein GlmU from Lactobacillus delbrueckii subsp. bulgaricus (strain ATCC BAA-365 / Lb-18).